Consider the following 185-residue polypeptide: Ribosome-recycling factor (185 aa).

The protein belongs to the RRF family.

It localises to the cytoplasm. In terms of biological role, responsible for the release of ribosomes from messenger RNA at the termination of protein biosynthesis. May increase the efficiency of translation by recycling ribosomes from one round of translation to another. This Aromatoleum aromaticum (strain DSM 19018 / LMG 30748 / EbN1) (Azoarcus sp. (strain EbN1)) protein is Ribosome-recycling factor.